Reading from the N-terminus, the 340-residue chain is Ras association domain-containing protein 1 (340 aa).

Position 2 is an N-acetylserine (S2). S2 is subject to Phosphoserine. Positions 2-115 are mediates interaction with E4F1; sequence SAEPELIELR…DLGWDSALER (114 aa). Residues 51–101 form a Phorbol-ester/DAG-type zinc finger; it reads GHRFQPAGPTTHTWCDLCGDFIWGVVRKGLQCAHCKFTCHYRCRALVCLDC. The span at 175–185 shows a compositional bias: low complexity; the sequence is SVPSSKKPPSL. A disordered region spans residues 175-196; it reads SVPSSKKPPSLQDARRGTGRST. The region spanning 194-288 is the Ras-associating domain; that stretch reads RSTAVKRRTS…LSFVLKENDS (95 aa). Residues 290-337 form the SARAH domain; sequence EVNWDAFSMPELHNFLRILQREEEEHLRQILQKYSRCRQKIQEALHAC. The tract at residues 311-314 is MOAP1-binding; the sequence is EEEE.

As to quaternary structure, interacts with MAP1S and XPA. Binds to the N-terminal of CDC20 during prometaphase. Binds to STK3/MST2 and STK4/MST1. Recruited to the TNFRSF1A and TNFRSF10A complexes in response to their respective cognate ligand, after internalization. Can self-associate. Part of a complex with MDM2, DAXX, RASSF1 and USP7. Interacts with MOAP1 and E4F1. Interacts with RSSF5 and probably associates with HRAS via a RSSF1 isoform A-RSSF5 heterodimer. Interacts (via C-terminus) with DAXX (via N-terminus); the interaction is independent of MDM2 and TP53. Interacts (via N-terminus) with MDM2 (via C-terminus); the interaction is independent of TP53. Interacts with RAB39A. Interacts with RAB39B; the interaction is weak. In terms of assembly, interacts with ECM2. Interacts with RAB39B; the interaction is strong. Does not interact with RAB39A.

The protein resides in the cytoplasm. The protein localises to the cytoskeleton. It localises to the microtubule organizing center. Its subcellular location is the centrosome. It is found in the spindle. The protein resides in the spindle pole. The protein localises to the nucleus. Functionally, potential tumor suppressor. Required for death receptor-dependent apoptosis. Mediates activation of Mediates activation of STK3/MST2 and STK4/MST1 during Fas-induced apoptosis by preventing their dephosphorylation. When associated with MOAP1, promotes BAX conformational change and translocation to mitochondrial membranes in response to TNF and TNFSF10 stimulation. Isoform A interacts with CDC20, an activator of the anaphase-promoting complex, APC, resulting in the inhibition of APC activity and mitotic progression. Inhibits proliferation by negatively regulating cell cycle progression at the level of G1/S-phase transition by regulating accumulation of cyclin D1 protein. Isoform C has been shown not to perform these roles, no function has been identified for this isoform. Isoform A disrupts interactions among MDM2, DAXX and USP7, thus contributing to the efficient activation of TP53 by promoting MDM2 self-ubiquitination in cell-cycle checkpoint control in response to DNA damage. The protein is Ras association domain-containing protein 1 of Mus musculus (Mouse).